The following is a 100-amino-acid chain: NADH-quinone oxidoreductase subunit K (100 aa).

The next 3 membrane-spanning stretches (helical) occupy residues 3–23 (LNAY…GIFL), 29–49 (ISIM…FVAF), and 60–80 (IFTF…LAIL).

This sequence belongs to the complex I subunit 4L family. As to quaternary structure, NDH-1 is composed of 14 different subunits. Subunits NuoA, H, J, K, L, M, N constitute the membrane sector of the complex.

The protein localises to the cell inner membrane. The enzyme catalyses a quinone + NADH + 5 H(+)(in) = a quinol + NAD(+) + 4 H(+)(out). Its function is as follows. NDH-1 shuttles electrons from NADH, via FMN and iron-sulfur (Fe-S) centers, to quinones in the respiratory chain. The immediate electron acceptor for the enzyme in this species is believed to be ubiquinone. Couples the redox reaction to proton translocation (for every two electrons transferred, four hydrogen ions are translocated across the cytoplasmic membrane), and thus conserves the redox energy in a proton gradient. The sequence is that of NADH-quinone oxidoreductase subunit K from Magnetococcus marinus (strain ATCC BAA-1437 / JCM 17883 / MC-1).